The following is a 57-amino-acid chain: Small ribosomal subunit protein bS21 (57 aa).

The disordered stretch occupies residues 24 to 57 (SKSGTLQESRKREFYEKPSVKRKKKSEAARKRKF). Basic and acidic residues predominate over residues 31–42 (ESRKREFYEKPS). A compositionally biased stretch (basic residues) spans 43 to 57 (VKRKKKSEAARKRKF).

This sequence belongs to the bacterial ribosomal protein bS21 family.

The sequence is that of Small ribosomal subunit protein bS21 (rpsU) from Listeria innocua serovar 6a (strain ATCC BAA-680 / CLIP 11262).